A 531-amino-acid polypeptide reads, in one-letter code: UPF0159 protein CPn_0746/CP_1126/CPj0746/CpB0774 (531 aa).

2 consecutive ThyX domains span residues 38–274 (KGAL…AEPH) and 309–511 (PSVQ…FKFV).

Belongs to the UPF0159 family.

The protein is UPF0159 protein CPn_0746/CP_1126/CPj0746/CpB0774 of Chlamydia pneumoniae (Chlamydophila pneumoniae).